The chain runs to 269 residues: Eukaryotic translation initiation factor 3 subunit G-1 (269 aa).

The RRM domain occupies 188–266 (AAIRISNLSE…LILSVEWSKP (79 aa)).

Belongs to the eIF-3 subunit G family. Component of the eukaryotic translation initiation factor 3 (eIF-3) complex. The eIF-3 complex interacts with pix.

Its subcellular location is the cytoplasm. RNA-binding component of the eukaryotic translation initiation factor 3 (eIF-3) complex, which is involved in protein synthesis of a specialized repertoire of mRNAs and, together with other initiation factors, stimulates binding of mRNA and methionyl-tRNAi to the 40S ribosome. The eIF-3 complex specifically targets and initiates translation of a subset of mRNAs involved in cell proliferation. This subunit can bind 18S rRNA. This is Eukaryotic translation initiation factor 3 subunit G-1 from Drosophila sechellia (Fruit fly).